Consider the following 365-residue polypeptide: Holliday junction branch migration complex subunit RuvB (365 aa).

A compositionally biased stretch (polar residues) spans 1–10; sequence MAIVSSNAAS. The interval 1-48 is disordered; it reads MAIVSSNAASQRPRPDRGPDRVPNRVVDGARQAEDDRDPGRVGAKEDS. Composition is skewed to basic and acidic residues over residues 13–23 and 31–48; these read PRPDRGPDRVP and RQAE…KEDS. Positions 13–210 are large ATPase domain (RuvB-L); the sequence is PRPDRGPDRV…FGLIQRLEFY (198 aa). ATP-binding residues include L49, R50, G91, K94, T95, T96, R200, Y210, and R247. T95 is a Mg(2+) binding site. Residues 211–282 form a small ATPAse domain (RuvB-S) region; the sequence is GLEDLQAIVE…LVDEALTLHR (72 aa). Positions 285–365 are head domain (RuvB-H); the sequence is GRGLDASDRR…GWPYPQEQAA (81 aa). Positions 340 and 345 each coordinate DNA.

It belongs to the RuvB family. As to quaternary structure, homohexamer. Forms an RuvA(8)-RuvB(12)-Holliday junction (HJ) complex. HJ DNA is sandwiched between 2 RuvA tetramers; dsDNA enters through RuvA and exits via RuvB. An RuvB hexamer assembles on each DNA strand where it exits the tetramer. Each RuvB hexamer is contacted by two RuvA subunits (via domain III) on 2 adjacent RuvB subunits; this complex drives branch migration. In the full resolvosome a probable DNA-RuvA(4)-RuvB(12)-RuvC(2) complex forms which resolves the HJ.

Its subcellular location is the cytoplasm. The enzyme catalyses ATP + H2O = ADP + phosphate + H(+). Its function is as follows. The RuvA-RuvB-RuvC complex processes Holliday junction (HJ) DNA during genetic recombination and DNA repair, while the RuvA-RuvB complex plays an important role in the rescue of blocked DNA replication forks via replication fork reversal (RFR). RuvA specifically binds to HJ cruciform DNA, conferring on it an open structure. The RuvB hexamer acts as an ATP-dependent pump, pulling dsDNA into and through the RuvAB complex. RuvB forms 2 homohexamers on either side of HJ DNA bound by 1 or 2 RuvA tetramers; 4 subunits per hexamer contact DNA at a time. Coordinated motions by a converter formed by DNA-disengaged RuvB subunits stimulates ATP hydrolysis and nucleotide exchange. Immobilization of the converter enables RuvB to convert the ATP-contained energy into a lever motion, pulling 2 nucleotides of DNA out of the RuvA tetramer per ATP hydrolyzed, thus driving DNA branch migration. The RuvB motors rotate together with the DNA substrate, which together with the progressing nucleotide cycle form the mechanistic basis for DNA recombination by continuous HJ branch migration. Branch migration allows RuvC to scan DNA until it finds its consensus sequence, where it cleaves and resolves cruciform DNA. In Synechococcus sp. (strain WH7803), this protein is Holliday junction branch migration complex subunit RuvB.